A 762-amino-acid chain; its full sequence is Lysyl oxidase homolog 2B (762 aa).

The signal sequence occupies residues 1–20 (MLALWSISFVLLCSWRLSYA). 4 SRCR domains span residues 53–154 (LRLA…VVCS), 183–292 (IRPI…VSCI), 316–417 (VRLR…VKCN), and 427–536 (LRLS…VSCS). Cystine bridges form between Cys-79–Cys-143, Cys-92–Cys-153, Cys-123–Cys-133, Cys-213–Cys-281, Cys-226–Cys-291, Cys-260–Cys-270, Cys-341–Cys-406, Cys-354–Cys-416, and Cys-385–Cys-395. N-linked (GlcNAc...) asparagine glycosylation is present at Asn-278. Asn-447 carries N-linked (GlcNAc...) asparagine glycosylation. 3 disulfide bridges follow: Cys-456–Cys-522, Cys-469–Cys-535, and Cys-503–Cys-513. Positions 540-742 (PDLVLNPQVV…WMYNCHIGGS (203 aa)) are lysyl-oxidase like. The Ca(2+) site is built by Asp-541 and Leu-542. Disulfide bonds link Cys-565-Cys-616, Cys-571-Cys-686, Cys-648-Cys-664, and Cys-654-Cys-676. His-617, His-619, and His-621 together coordinate Cu cation. Asn-635 is a glycosylation site (N-linked (GlcNAc...) asparagine). Residues 644 to 680 (KASFCLEDSECDEGIEKRYECANFGEQGITVGCWDTY) constitute a cross-link (lysine tyrosylquinone (Lys-Tyr)). Tyr-680 bears the 2',4',5'-topaquinone mark. Ca(2+) is bound by residues Glu-713, Asp-715, Asn-718, and Asn-719. A disulfide bridge connects residues Cys-723 and Cys-737.

It belongs to the lysyl oxidase family. The cofactor is Cu cation. Requires lysine tyrosylquinone residue as cofactor. Post-translationally, the lysine tyrosylquinone cross-link (LTQ) is generated by condensation of the epsilon-amino group of a lysine with a topaquinone produced by oxidation of tyrosine.

It localises to the secreted. Its subcellular location is the extracellular space. It is found in the extracellular matrix. The protein localises to the basement membrane. The protein resides in the nucleus. It localises to the chromosome. Its subcellular location is the endoplasmic reticulum. The enzyme catalyses L-lysyl-[protein] + O2 + H2O = (S)-2-amino-6-oxohexanoyl-[protein] + H2O2 + NH4(+). Its function is as follows. Mediates the post-translational oxidative deamination of lysine residues on target proteins leading to the formation of deaminated lysine (allysine). Acts as a transcription corepressor and specifically mediates deamination of trimethylated 'Lys-4' of histone H3 (H3K4me3), a specific tag for epigenetic transcriptional activation. Shows no activity against histone H3 when it is trimethylated on 'Lys-9' (H3K9me3) or 'Lys-27' (H3K27me3) or when 'Lys-4' is monomethylated (H3K4me1) or dimethylated (H3K4me2). Also mediates deamination of methylated TAF10, a member of the transcription factor IID (TFIID) complex, which induces release of TAF10 from promoters, leading to inhibition of TFIID-dependent transcription. LOXL2-mediated deamination of TAF10 results in transcriptional repression of genes required for embryonic stem cell pluripotency. Involved in epithelial to mesenchymal transition (EMT) and participates in repression of E-cadherin, probably by mediating deamination of histone H3. When secreted into the extracellular matrix, promotes cross-linking of extracellular matrix proteins by mediating oxidative deamination of peptidyl lysine residues in precursors to fibrous collagen and elastin. Acts as a regulator of sprouting angiogenesis, probably via collagen IV scaffolding. Acts as a regulator of chondrocyte differentiation, probably by regulating expression of factors that control chondrocyte differentiation. Required with loxl2a for correct expression of Sox2 and for neural differentiation. This is Lysyl oxidase homolog 2B (loxl2b) from Danio rerio (Zebrafish).